A 156-amino-acid polypeptide reads, in one-letter code: MADVHDKATRSKNMRAIATRDTAIEKRLASLLTGQGLAFRVQDASLPGRPDFVVDEYRCVIFTHGCFWHHHHCYLFKVPATRTEFWLEKIGKNVERDRRDISRLQELGWRVLIVWECALRGREKLTDEALTERLEEWICGEGASAQIDTQGIHLLA.

Mg(2+)-binding residues include Asp-51 and Thr-63.

Belongs to the Vsr family. Mg(2+) is required as a cofactor. Zn(2+) serves as cofactor.

Its function is as follows. Deamination of 5-methylcytosine in DNA results in T/G mismatches. If unrepaired, these mismatches can lead to C-to-T transition mutations. The very short patch (VSP) repair process in E.coli counteracts the mutagenic process by repairing the mismatches in favor of the G-containing strand. This enzyme is an endonuclease that nicks double-stranded DNA within the sequence CT(AT)GN or NT(AT)GG next to the thymidine residue that is mismatched to 2'-deoxyguanosine. The incision is mismatch-dependent and strand-specific. The polypeptide is DNA mismatch endonuclease Vsr (Escherichia coli (strain K12)).